The following is a 61-amino-acid chain: Small ribosomal subunit protein uS14B (61 aa).

Zn(2+) is bound by residues C24, C27, C40, and C43.

Belongs to the universal ribosomal protein uS14 family. Zinc-binding uS14 subfamily. In terms of assembly, part of the 30S ribosomal subunit. Contacts proteins S3 and S10. Requires Zn(2+) as cofactor.

Its function is as follows. Binds 16S rRNA, required for the assembly of 30S particles and may also be responsible for determining the conformation of the 16S rRNA at the A site. The polypeptide is Small ribosomal subunit protein uS14B (Mycobacterium bovis (strain ATCC BAA-935 / AF2122/97)).